Consider the following 377-residue polypeptide: Chaperone protein DnaJ (377 aa).

The J domain maps to 6–70 (DYYKILGIDK…EKKAIYDKYG (65 aa)). The CR-type zinc-finger motif lies at 143–225 (GRVISQKLDK…CKGAKKIKES (83 aa)). Zn(2+)-binding residues include Cys-156, Cys-159, Cys-173, Cys-176, Cys-199, Cys-202, Cys-213, and Cys-216. 4 CXXCXGXG motif repeats span residues 156–163 (CESCNGTG), 173–180 (CSTCNGRG), 199–206 (CSTCNGLG), and 213–220 (CPSCKGAK).

Belongs to the DnaJ family. Homodimer. Requires Zn(2+) as cofactor.

Its subcellular location is the cytoplasm. Participates actively in the response to hyperosmotic and heat shock by preventing the aggregation of stress-denatured proteins and by disaggregating proteins, also in an autonomous, DnaK-independent fashion. Unfolded proteins bind initially to DnaJ; upon interaction with the DnaJ-bound protein, DnaK hydrolyzes its bound ATP, resulting in the formation of a stable complex. GrpE releases ADP from DnaK; ATP binding to DnaK triggers the release of the substrate protein, thus completing the reaction cycle. Several rounds of ATP-dependent interactions between DnaJ, DnaK and GrpE are required for fully efficient folding. Also involved, together with DnaK and GrpE, in the DNA replication of plasmids through activation of initiation proteins. This is Chaperone protein DnaJ from Mycoplasmopsis pulmonis (strain UAB CTIP) (Mycoplasma pulmonis).